Consider the following 374-residue polypeptide: MLRRITCSSSLASPSLFLRFFRQLPRSYSSPTTIAVSGRNIRRLSTPTTLRCICSHSSSEIISEHPPFVRVYKDGRIERLSGTETVPASLNPRNDVVSKDVVYSPGHNLSVRLFLPHKSTQLAAGNKLPLLIYFHGGAWINESPFSPIYHNFLTEVVKSANCLAVSVQYRRAPEDPVPAAYEDTWSAIQWIFSHSCGSGEEDWINKYADFERVFLAGDSAGGNISHHMAMRAGKEKLKPRIKGTVIVHPAIWGKDPVDEHDVQDREIRDGVAEVWEKIVSPNSVDGADDPWFNVVGSGSNFSGMGCDKVLVEVAGKDVFWRQGLAYAAKLKKSGWKGEVEVIEEEDEEHCFHLLNPSSENAPSFMKRFVEFITG.

The transit peptide at 1–52 (MLRRITCSSSLASPSLFLRFFRQLPRSYSSPTTIAVSGRNIRRLSTPTTLRC) directs the protein to the mitochondrion. The Involved in the stabilization of the negatively charged intermediate by the formation of the oxyanion hole motif lies at 135 to 137 (HGG). Residues Ser219, Asp317, and His349 contribute to the active site.

Belongs to the 'GDXG' lipolytic enzyme family. In terms of tissue distribution, expressed in leaves, stems, flowers and siliques.

Its subcellular location is the mitochondrion. The catalysed reaction is a carboxylic ester + H2O = an alcohol + a carboxylate + H(+). In terms of biological role, carboxylesterase acting on esters with varying acyl chain length. This is Probable carboxylesterase 4, mitochondrial (CXE4) from Arabidopsis thaliana (Mouse-ear cress).